The following is a 110-amino-acid chain: UPF0060 membrane protein Ping_0587 (110 aa).

Transmembrane regions (helical) follow at residues 6–26, 33–53, 61–81, and 87–107; these read IFGI…LPYL, SIWL…LLTL, TYAA…WLVE, and MTDL…MFGP.

The protein belongs to the UPF0060 family.

The protein localises to the cell inner membrane. The sequence is that of UPF0060 membrane protein Ping_0587 from Psychromonas ingrahamii (strain DSM 17664 / CCUG 51855 / 37).